The chain runs to 72 residues: Protein CYSTEINE-RICH TRANSMEMBRANE MODULE 1 (72 aa).

A compositionally biased stretch (polar residues) spans 1 to 11; that stretch reads MSQYDHNQSAG. Positions 1–46 are disordered; the sequence is MSQYDHNQSAGANPPPPMSTCTSPPPPIGYPTNQPSHGSVAQGKVE. Pro residues predominate over residues 13-29; sequence NPPPPMSTCTSPPPPIG. A helical transmembrane segment spans residues 49 to 65; it reads SKGDGFFKGCLAAMCCC.

It belongs to the CYSTM1 family. In terms of assembly, heterodimers. Binds weakly to CYSTM7 and WIH1/CYSTM13. In terms of tissue distribution, mostly expressed in roots, flowers and siliques and, to a lower extent, in stems and leaves.

The protein localises to the cell membrane. The protein resides in the nucleus. May be involved in aluminium (Al) tolerance. Involved in resistance to abiotic stress. In Arabidopsis thaliana (Mouse-ear cress), this protein is Protein CYSTEINE-RICH TRANSMEMBRANE MODULE 1.